The following is a 688-amino-acid chain: Polyribonucleotide nucleotidyltransferase (688 aa).

Mg(2+) is bound by residues Asp484 and Asp490. The region spanning 550–609 (PTTEIFNVAPDKIVEIIGQGGRVIKEIVEKFEVKIDLNKPSGEVKIMGNKERVLKTKEFI) is the KH domain. In terms of domain architecture, S1 motif spans 626 to 688 (DEVLEAQVKR…NKGKIALDLA (63 aa)).

It belongs to the polyribonucleotide nucleotidyltransferase family. Requires Mg(2+) as cofactor.

It is found in the cytoplasm. It catalyses the reaction RNA(n+1) + phosphate = RNA(n) + a ribonucleoside 5'-diphosphate. Its function is as follows. Involved in mRNA degradation. Catalyzes the phosphorolysis of single-stranded polyribonucleotides processively in the 3'- to 5'-direction. This is Polyribonucleotide nucleotidyltransferase from Helicobacter pylori (strain HPAG1).